A 136-amino-acid polypeptide reads, in one-letter code: Small ribosomal subunit protein uS9 (136 aa).

It belongs to the universal ribosomal protein uS9 family.

The chain is Small ribosomal subunit protein uS9 from Borrelia turicatae (strain 91E135).